The sequence spans 513 residues: Na(+)/H(+) antiporter NhaB (513 aa).

9 helical membrane passes run 21–41 (ICIIAFLVINPLIYFFISPFV), 88–108 (IMANFEVILLLMFMVAGIYFM), 119–139 (LLIVIHSKKILSLAFCLSATF), 243–263 (LPVSLPVLICGVITCLLLEHF), 299–318 (MGIQALAGIWLVVGLALHLA), 322–344 (IIGLTIIIICTAFCGITDEHAIG), 350–370 (PMPFTALIVVFFTVVAVIVDL), 389–409 (LALFYVFNGLLSMISDNVFVG), and 477–497 (MALPYTIVLSIIGFLSLEFLL).

The protein belongs to the NhaB Na(+)/H(+) (TC 2.A.34) antiporter family.

It localises to the cell inner membrane. The catalysed reaction is 2 Na(+)(in) + 3 H(+)(out) = 2 Na(+)(out) + 3 H(+)(in). Na(+)/H(+) antiporter that extrudes sodium in exchange for external protons. This is Na(+)/H(+) antiporter NhaB from Actinobacillus pleuropneumoniae serotype 5b (strain L20).